Here is a 1218-residue protein sequence, read N- to C-terminus: NACHT, LRR and PYD domains-containing protein 1a allele 5 (1218 aa).

The span at 1–29 shows a compositional bias: polar residues; the sequence is MGESQSKQESNTRVAQHGSQQDVDPTFQT. Disordered stretches follow at residues 1 to 44 and 71 to 91; these read MGES…QVEQ and EMDHESRRHSHQSKKKLDRSE. Positions 77–87 are enriched in basic residues; that stretch reads RRHSHQSKKKL. Residues 175 to 484 form the NACHT domain; the sequence is QLVIIEGAAG…EFFAAMSYIL (310 aa). An ATP-binding site is contributed by 181 to 188; that stretch reads GAAGIGKS. LRR repeat units follow at residues 343–364, 673–693, and 730–750; these read KERNTIIDFNLIGSIPVLLTLC, NLEELDLSGNPLSYSAVRSLC, and RLAELDLRLNDLGDNGVRQLC. Positions 799–815 are enriched in polar residues; the sequence is TMPTENTDGEESLTSSK. Residues 799-842 are disordered; sequence TMPTENTDGEESLTSSKQQQQQSGDKHMEPLGTDDDFWGPSGPV. The tract at residues 835 to 968 is ZU5; sequence FWGPSGPVST…HFAVLENPSF (134 aa). The region spanning 835–1118 is the FIIND domain; sequence FWGPSGPVST…LRPALPRMAS (284 aa). The tract at residues 969-1118 is UPA; the sequence is SPMGVLLRMI…LRPALPRMAS (150 aa). In terms of domain architecture, CARD spans 1122 to 1211; the sequence is DAPALLHFVD…HLIMDLLEKS (90 aa).

It belongs to the NLRP family. Interacts (via LRR repeats) with BCL2 and BCL2L1 (via the loop between motifs BH4 and BH3). Interacts with NOD2; this interaction is enhanced in the presence of muramyl dipeptide (MDP) and increases IL1B release. Interacts with EIF2AK2/PKR; this interaction requires EIF2AK2 activity, is accompanied by EIF2AK2 autophosphorylation and promotes inflammasome assembly in response to danger-associated signals. Interacts with MEFV; this interaction targets Nlrp1a to degradation by autophagy, hence preventing excessive IL1B- and IL18-mediated inflammation. Interacts with DPP9; leading to inhibit activation of the inflammasome. DPP9 acts via formation of a ternary complex, composed of a DPP9 homodimer, one full-length NLRP1 protein, and one cleaved C-terminus of Nlrp1a (NACHT, LRR and PYD domains-containing protein 1a, C-terminus). Interacts with DPP8; leading to inhibit activation of the inflammasome, probably via formation of a ternary complex with DPP8. As to quaternary structure, interacts with the C-terminal part of Nlrp1a (NACHT, LRR and PYD domains-containing protein 1a, C-terminus) in absence of pathogens and other damage-associated signals. In terms of assembly, interacts with the N-terminal part of Nlrp1a (NACHT, LRR and PYD domains-containing protein 1a, N-terminus) in absence of pathogens and other damage-associated signals. Homomultimer; forms the Nlrp1a inflammasome polymeric complex, a filament composed of homopolymers of this form in response to pathogens and other damage-associated signals. The Nlrp1a inflammasome polymeric complex directly recruits pro-caspase-1 (proCASP1) independently of PYCARD/ASC. Interacts (via CARD domain) with CASP1 (via CARD domain); leading to CASP1 activation. Autocatalytically cleaved. Autocatalytic cleavage in FIIND region occurs constitutively, prior to activation signals, and is required for inflammasome activity (IL1B release), possibly by facilitating CASP1 binding. Both N- and C-terminal parts remain associated non-covalently. In terms of processing, ubiquitinated in response to pathogen-associated signals, leading to its degradation by the proteasome and subsequent release of the cleaved C-terminal part of the protein (NACHT, LRR and PYD domains-containing protein 1a, C-terminus), which polymerizes and forms the Nlrp1a inflammasome.

Its subcellular location is the cytoplasm. It is found in the cytosol. It localises to the nucleus. The protein localises to the inflammasome. Activated by pathogens and other damage-associated signals: activation promotes ubiquitination and degradation of the N-terminal part, releasing the cleaved C-terminal part of the protein (NACHT, LRR and PYD domains-containing protein 1a, C-terminus), which polymerizes and forms the Nlrp1a inflammasome. Nlrp1a inflammasome is inhibited by DPP8 and DPP9, which sequester the C-terminal fragment of Nlrp1a (NACHT, LRR and PYD domains-containing protein 1a, C-terminus) in a ternary complex, thereby preventing Nlrp1a oligomerization and activation. Nlrp1a inflammasome is strongly activated by Val-boroPro (Talabostat, PT-100), an inhibitor of dipeptidyl peptidases DPP8 and DPP9. Val-boroPro relieves inhibition of DPP8 and/or DPP9 by promoting disruption of the ternary complex, releasing its C-terminal part from autoinhibition. Not activated by cleavage by B.anthracis lethal toxin (LT) endopeptidase. Highly activated by Toxoplasma gondii. Acts as the sensor component of the Nlrp1a inflammasome, which mediates inflammasome activation in response to various pathogen-associated signals, leading to subsequent pyroptosis. Inflammasomes are supramolecular complexes that assemble in the cytosol in response to pathogens and other damage-associated signals and play critical roles in innate immunity and inflammation. Acts as a recognition receptor (PRR): recognizes specific pathogens and other damage-associated signals, such as Val-boroPro inhibitor, and mediates the formation of the inflammasome polymeric complex. In response to pathogen-associated signals, the N-terminal part of Nlrp1a is degraded by the proteasome, releasing the cleaved C-terminal part of the protein (NACHT, LRR and PYD domains-containing protein 1a, C-terminus), which polymerizes to initiate the formation of the inflammasome complex: the inflammasome directly recruits pro-caspase-1 (proCASP1) independently of PYCARD/ASC and promotes caspase-1 (CASP1) activation, which subsequently cleaves and activates inflammatory cytokines IL1B and IL18 and gasdermin-D (GSDMD), leading to pyroptosis. In the absence of GSDMD expression, the Nlrp1a inflammasome is able to recruit and activate CASP8, leading to activation of gasdermin-E (GSDME). Its function is as follows. Constitutes the precursor of the Nlrp1a inflammasome, which mediates autoproteolytic processing within the FIIND domain to generate the N-terminal and C-terminal parts, which are associated non-covalently in absence of pathogens and other damage-associated signals. In terms of biological role, regulatory part that prevents formation of the Nlrp1a inflammasome: in absence of pathogens and other damage-associated signals, interacts with the C-terminal part of Nlrp1a (NACHT, LRR and PYD domains-containing protein 1a, C-terminus), preventing activation of the Nlrp1a inflammasome. In response to pathogen-associated signals, this part is ubiquitinated by the N-end rule pathway and degraded by the proteasome, releasing the cleaved C-terminal part of the protein, which polymerizes and forms the Nlrp1a inflammasome. Functionally, constitutes the active part of the Nlrp1a inflammasome. In absence of pathogens and other damage-associated signals, interacts with the N-terminal part of Nlrp1a (NACHT, LRR and PYD domains-containing protein 1a, N-terminus), preventing activation of the Nlrp1a inflammasome. In response to pathogen-associated signals, the N-terminal part of Nlrp1a is degraded by the proteasome, releasing this form, which polymerizes to form the Nlrp1a inflammasome complex: the Nlrp1a inflammasome complex then directly recruits pro-caspase-1 (proCASP1) and promotes caspase-1 (CASP1) activation, leading to gasdermin-D (GSDMD) cleavage and subsequent pyroptosis. The polypeptide is NACHT, LRR and PYD domains-containing protein 1a allele 5 (Rattus norvegicus (Rat)).